Consider the following 158-residue polypeptide: Low molecular weight phosphotyrosine protein phosphatase (158 aa).

An N-acetylalanine modification is found at Ala2. Catalysis depends on Cys13, which acts as the Nucleophile. Residue Arg19 is part of the active site. Asp130 (proton donor) is an active-site residue. Residues Tyr132 and Tyr133 each carry the phosphotyrosine modification.

Belongs to the low molecular weight phosphotyrosine protein phosphatase family. In terms of assembly, interacts with EPHA2; dephosphorylates EPHA2. Interacts with EPHB1. Interacts with the SH3 domain of SPTAN1. In terms of processing, phosphorylated by LCK. Phosphorylation at Tyr-132 increases its phosphatase activity.

It is found in the cytoplasm. It carries out the reaction O-phospho-L-tyrosyl-[protein] + H2O = L-tyrosyl-[protein] + phosphate. The catalysed reaction is a phosphate monoester + H2O = an alcohol + phosphate. Its activity is regulated as follows. Inhibited by sulfhydryl reagents. In terms of biological role, acts on tyrosine phosphorylated proteins, low-MW aryl phosphates and natural and synthetic acyl phosphates with differences in substrate specificity between isoform 1 and isoform 2. The polypeptide is Low molecular weight phosphotyrosine protein phosphatase (ACP1) (Pongo abelii (Sumatran orangutan)).